Reading from the N-terminus, the 868-residue chain is Leucine--tRNA ligase (868 aa).

Residues 42–52 (PYPSGKLHMGH) carry the 'HIGH' region motif. The 'KMSKS' region signature appears at 624–628 (TMSKS). Position 627 (lysine 627) interacts with ATP.

Belongs to the class-I aminoacyl-tRNA synthetase family.

It localises to the cytoplasm. It carries out the reaction tRNA(Leu) + L-leucine + ATP = L-leucyl-tRNA(Leu) + AMP + diphosphate. The sequence is that of Leucine--tRNA ligase from Nitrosomonas eutropha (strain DSM 101675 / C91 / Nm57).